We begin with the raw amino-acid sequence, 754 residues long: Phosphatidylinositol 4-phosphate 5-kinase 7 (754 aa).

MORN repeat units lie at residues 16–38, 39–61, 62–84, 85–107, 108–130, 131–153, 154–176, and 177–198; these read YSGE…DGTI, YEGD…SGAK, YEGD…DESV, YSGA…NSDL, YDGL…NGNR, YIGN…NGDL, YDGF…DGCL, and YYGT…AGTK. In terms of domain architecture, PIPK spans 329–750; that stretch reads GEHNYYLMLN…RFVNFLHKVF (422 aa). The interval 710 to 731 is activation loop; it reads YNTKKKVEHTCKSLQYDPMTIS.

The enzyme catalyses a 1,2-diacyl-sn-glycero-3-phospho-(1D-myo-inositol 4-phosphate) + ATP = a 1,2-diacyl-sn-glycero-3-phospho-(1D-myo-inositol-4,5-bisphosphate) + ADP + H(+). This chain is Phosphatidylinositol 4-phosphate 5-kinase 7 (PIP5K7), found in Arabidopsis thaliana (Mouse-ear cress).